A 246-amino-acid chain; its full sequence is Pyridoxine 5'-phosphate synthase (246 aa).

N12 is a 3-amino-2-oxopropyl phosphate binding site. Position 14–15 (14–15 (DH)) interacts with 1-deoxy-D-xylulose 5-phosphate. Position 23 (R23) interacts with 3-amino-2-oxopropyl phosphate. The active-site Proton acceptor is the H48. 1-deoxy-D-xylulose 5-phosphate contacts are provided by R50 and H55. E75 functions as the Proton acceptor in the catalytic mechanism. T105 is a 1-deoxy-D-xylulose 5-phosphate binding site. The active-site Proton donor is the H196. 3-amino-2-oxopropyl phosphate-binding positions include G197 and 218–219 (GH).

This sequence belongs to the PNP synthase family. In terms of assembly, homooctamer; tetramer of dimers.

The protein localises to the cytoplasm. It catalyses the reaction 3-amino-2-oxopropyl phosphate + 1-deoxy-D-xylulose 5-phosphate = pyridoxine 5'-phosphate + phosphate + 2 H2O + H(+). Its pathway is cofactor biosynthesis; pyridoxine 5'-phosphate biosynthesis; pyridoxine 5'-phosphate from D-erythrose 4-phosphate: step 5/5. Catalyzes the complicated ring closure reaction between the two acyclic compounds 1-deoxy-D-xylulose-5-phosphate (DXP) and 3-amino-2-oxopropyl phosphate (1-amino-acetone-3-phosphate or AAP) to form pyridoxine 5'-phosphate (PNP) and inorganic phosphate. This chain is Pyridoxine 5'-phosphate synthase, found in Pseudomonas syringae pv. tomato (strain ATCC BAA-871 / DC3000).